Reading from the N-terminus, the 432-residue chain is Beta-fructosidase (432 aa).

Substrate contacts are provided by residues 14-17, glutamine 33, tryptophan 41, 74-75, tyrosine 92, 137-138, 188-190, threonine 208, and tryptophan 260; these read WMND, FS, RD, and EIE. The active site involves aspartate 17.

The protein belongs to the glycosyl hydrolase 32 family.

It carries out the reaction Hydrolysis of terminal non-reducing beta-D-fructofuranoside residues in beta-D-fructofuranosides.. In terms of biological role, hydrolysis of sucrose, raffinose, inulin and levan. Specific for the fructose moiety and the beta-anomeric configuration of the glycosidic linkages of its substrates. The enzyme released fructose from sucrose and raffinose, and the fructose polymer inulin is hydrolyzed quantitatively in an exo-type fashion. The polypeptide is Beta-fructosidase (bfrA) (Thermotoga maritima (strain ATCC 43589 / DSM 3109 / JCM 10099 / NBRC 100826 / MSB8)).